A 160-amino-acid polypeptide reads, in one-letter code: Nucleotide-binding protein VV1_2655 (160 aa).

This sequence belongs to the YajQ family.

In terms of biological role, nucleotide-binding protein. In Vibrio vulnificus (strain CMCP6), this protein is Nucleotide-binding protein VV1_2655.